Here is a 454-residue protein sequence, read N- to C-terminus: MKKLFGTDGVRGVANVYPMTAEMAMQIGRAAAYIFKNGKKRHRIVIGKDTRLSGYMLESALMAGICSMGVDVLLVGPLPTPGIANITSSMRADAGVVISASHNPFEDNGIKFFSRDGFKLPDETELMMEELIFSKRIDSLRPTAKEVGKAYRIDDAQGRFVVFLKSTFPKDLDLSGLKIVLDCANGAAYKVAPAVFEELGAEVISIGVKPNGTNINADCGSLHPEVMSQAVKEHGADLGVALDGDADRVIFVDEYGNVVDGDRIMAICATEMIRQGILKQNTLVATVMSNMGLDIAMKRAGGQVIKTAVGDRYVVEEMLKGGYNLGGEQSGHMIFLDHNTTGDGVLSALQVLAIMQRHQKRLSELALVMEPLPQVLVNVRLAEKSDIMQVPEIAKLINDVEEKLKGEGRVLIRYSGTEPLLRIMLEGSDEGDIRCWANDIASIVAQKLGGEARG.

Catalysis depends on serine 101, which acts as the Phosphoserine intermediate. Residues serine 101, aspartate 243, aspartate 245, and aspartate 247 each contribute to the Mg(2+) site. Serine 101 carries the post-translational modification Phosphoserine.

It belongs to the phosphohexose mutase family. The cofactor is Mg(2+). Activated by phosphorylation.

The enzyme catalyses alpha-D-glucosamine 1-phosphate = D-glucosamine 6-phosphate. Its function is as follows. Catalyzes the conversion of glucosamine-6-phosphate to glucosamine-1-phosphate. This Citrifermentans bemidjiense (strain ATCC BAA-1014 / DSM 16622 / JCM 12645 / Bem) (Geobacter bemidjiensis) protein is Phosphoglucosamine mutase.